A 437-amino-acid chain; its full sequence is UDP-N-acetylmuramate--L-alanine ligase (437 aa).

114-120 contributes to the ATP binding site; the sequence is GTHGKTS.

This sequence belongs to the MurCDEF family.

The protein localises to the cytoplasm. The catalysed reaction is UDP-N-acetyl-alpha-D-muramate + L-alanine + ATP = UDP-N-acetyl-alpha-D-muramoyl-L-alanine + ADP + phosphate + H(+). Its pathway is cell wall biogenesis; peptidoglycan biosynthesis. Cell wall formation. The polypeptide is UDP-N-acetylmuramate--L-alanine ligase (Lactobacillus helveticus (strain DPC 4571)).